The chain runs to 248 residues: Pyridoxine 5'-phosphate synthase (248 aa).

Asn-10 contributes to the 3-amino-2-oxopropyl phosphate binding site. 1-deoxy-D-xylulose 5-phosphate is bound at residue 12-13 (DH). Arg-21 is a binding site for 3-amino-2-oxopropyl phosphate. The active-site Proton acceptor is the His-46. Residues Arg-48 and His-53 each coordinate 1-deoxy-D-xylulose 5-phosphate. The Proton acceptor role is filled by Glu-73. A 1-deoxy-D-xylulose 5-phosphate-binding site is contributed by Thr-103. The active-site Proton donor is His-194. 3-amino-2-oxopropyl phosphate contacts are provided by residues Gly-195 and 216-217 (GH).

This sequence belongs to the PNP synthase family. In terms of assembly, homooctamer; tetramer of dimers.

Its subcellular location is the cytoplasm. It catalyses the reaction 3-amino-2-oxopropyl phosphate + 1-deoxy-D-xylulose 5-phosphate = pyridoxine 5'-phosphate + phosphate + 2 H2O + H(+). Its pathway is cofactor biosynthesis; pyridoxine 5'-phosphate biosynthesis; pyridoxine 5'-phosphate from D-erythrose 4-phosphate: step 5/5. Its function is as follows. Catalyzes the complicated ring closure reaction between the two acyclic compounds 1-deoxy-D-xylulose-5-phosphate (DXP) and 3-amino-2-oxopropyl phosphate (1-amino-acetone-3-phosphate or AAP) to form pyridoxine 5'-phosphate (PNP) and inorganic phosphate. This Legionella pneumophila (strain Paris) protein is Pyridoxine 5'-phosphate synthase.